Consider the following 1009-residue polypeptide: Protein-tyrosine kinase 2-beta (1009 aa).

In terms of domain architecture, FERM spans 39 to 359 (RILKVCFYSN…GYCRLQGEHK (321 aa)). Residues S361, S375, and S399 each carry the phosphoserine modification. Y402 is modified (phosphotyrosine; by autocatalysis). Positions 425–683 (VVLNRILGEG…ELVCSLSDIY (259 aa)) constitute a Protein kinase domain. ATP is bound by residues 431-439 (LGEGFFGEV), K457, and 503-509 (ELYPYGE). D549 serves as the catalytic Proton acceptor. The residue at position 579 (Y579) is a Phosphotyrosine. Phosphotyrosine; by SRC, FYN and LCK is present on Y580. The interval 696 to 728 (NARYRPPKILEPTTFQEPPPKPSRPKYRPPPQT) is disordered. The segment covering 712 to 727 (EPPPKPSRPKYRPPPQ) has biased composition (pro residues). Residue Y722 is modified to Phosphotyrosine. Residue S762 is modified to Phosphoserine. T765 is subject to Phosphothreonine. The interaction with TGFB1I1 stretch occupies residues 801 to 1009 (KIKMKQVLER…VANLAHPPAE (209 aa)). At Y834 the chain carries Phosphotyrosine. Residue S839 is modified to Phosphoserine. Phosphothreonine is present on T842. The residue at position 849 (Y849) is a Phosphotyrosine. S866 carries the post-translational modification Phosphoserine. The interval 868 to 1009 (QPTANLDRTD…VANLAHPPAE (142 aa)) is focal adhesion targeting (FAT). Y881 carries the post-translational modification Phosphotyrosine.

Belongs to the protein kinase superfamily. Tyr protein kinase family. FAK subfamily. As to quaternary structure, homodimer, or homooligomer. Interacts with KCNA2. Interacts with NPHP1, ASAP1, ASAP2, ARHGAP26, SKAP2 and TGFB1I1. The Tyr-402 phosphorylated form interacts with SRC (via SH2 domain) and SRC family members. Forms a signaling complex with EPHA1, LCK and phosphatidylinositol 3-kinase; upon activation by EFNA1. Interacts with GRB2 (via SH2 domain). Interacts with P53/TP53 and MDM2. Interacts with MYLK. Interacts with BCAR1. Interacts with RB1CC1. Interacts with RHOU. Interacts with VAV1. Interacts with PDPK1. Interacts with DLG4. Interacts with LPXN and PTPN12. Interacts with SIRPA and SH2D3C. Interacts (hypophosphorylated) with PXN. Interacts with ARHGAP10. In terms of processing, phosphorylated on tyrosine residues in response to various stimuli that elevate the intracellular calcium concentration; this activation is indirect and may be mediated by production of reactive oxygen species (ROS). Tyr-402 is the major autophosphorylation site, but other kinases can also phosphorylate Tyr-402. Autophosphorylation occurs in trans, i.e. one subunit of the dimeric receptor phosphorylates tyrosine residues on the other subunit. Phosphorylation at Tyr-402 promotes interaction with SRC and SRC family members, leading to phosphorylation at Tyr-579; Tyr-580 and Tyr-881. Phosphorylation at Tyr-881 is important for interaction with GRB2. Phosphorylated on tyrosine residues upon activation of FGR and PKC. Recruitment by NPHP1 to cell matrix adhesions initiates Tyr-402 phosphorylation. In monocytes, adherence to substrata is required for tyrosine phosphorylation and kinase activation. Angiotensin II, thapsigargin and L-alpha-lysophosphatidic acid (LPA) also induce autophosphorylation and increase kinase activity. Phosphorylation by MYLK promotes ITGB2 activation and is thus essential to trigger neutrophil transmigration during lung injury. Dephosphorylated by PTPN12.

It is found in the cytoplasm. Its subcellular location is the perinuclear region. The protein localises to the cell membrane. It localises to the cell junction. The protein resides in the focal adhesion. It is found in the cell projection. Its subcellular location is the lamellipodium. The protein localises to the cell cortex. It localises to the nucleus. It carries out the reaction L-tyrosyl-[protein] + ATP = O-phospho-L-tyrosyl-[protein] + ADP + H(+). With respect to regulation, activated in response to stimuli that lead to increased intracellular Ca(2+) levels; this activation is indirect and may be mediated by calcium-mediated production of reactive oxygen species (ROS). Activated by autophosphorylation at Tyr-402; this creates a binding site for SRC family kinases and leads to phosphorylation at additional tyrosine residues. Phosphorylation at Tyr-402, Tyr-579 and Tyr-580 is required for optimal kinase activity. Functionally, non-receptor protein-tyrosine kinase that regulates reorganization of the actin cytoskeleton, cell polarization, cell migration, adhesion, spreading and bone remodeling. Plays a role in the regulation of the humoral immune response, and is required for normal levels of marginal B-cells in the spleen and normal migration of splenic B-cells. Required for normal macrophage polarization and migration towards sites of inflammation. Regulates cytoskeleton rearrangement and cell spreading in T-cells, and contributes to the regulation of T-cell responses. Promotes osteoclastic bone resorption; this requires both PTK2B/PYK2 and SRC. May inhibit differentiation and activity of osteoprogenitor cells. Functions in signaling downstream of integrin and collagen receptors, immune receptors, G-protein coupled receptors (GPCR), cytokine, chemokine and growth factor receptors, and mediates responses to cellular stress. Forms multisubunit signaling complexes with SRC and SRC family members upon activation; this leads to the phosphorylation of additional tyrosine residues, creating binding sites for scaffold proteins, effectors and substrates. Regulates numerous signaling pathways. Promotes activation of phosphatidylinositol 3-kinase and of the AKT1 signaling cascade. Promotes activation of NOS3. Regulates production of the cellular messenger cGMP. Promotes activation of the MAP kinase signaling cascade, including activation of MAPK1/ERK2, MAPK3/ERK1 and MAPK8/JNK1. Promotes activation of Rho family GTPases, such as RHOA and RAC1. Recruits the ubiquitin ligase MDM2 to P53/TP53 in the nucleus, and thereby regulates P53/TP53 activity, P53/TP53 ubiquitination and proteasomal degradation. Acts as a scaffold, binding to both PDPK1 and SRC, thereby allowing SRC to phosphorylate PDPK1 at 'Tyr-9, 'Tyr-373', and 'Tyr-376'. Promotes phosphorylation of NMDA receptors by SRC family members, and thereby contributes to the regulation of NMDA receptor ion channel activity and intracellular Ca(2+) levels. May also regulate potassium ion transport by phosphorylation of potassium channel subunits. Phosphorylates SRC; this increases SRC kinase activity. Phosphorylates ASAP1, NPHP1, KCNA2 and SHC1. Promotes phosphorylation of ASAP2, RHOU and PXN; this requires both SRC and PTK2/PYK2. The chain is Protein-tyrosine kinase 2-beta (Ptk2b) from Mus musculus (Mouse).